The sequence spans 207 residues: Thiamine-phosphate synthase (207 aa).

Residues 38 to 42 (QYRNK) and N70 each bind 4-amino-2-methyl-5-(diphosphooxymethyl)pyrimidine. Positions 71 and 90 each coordinate Mg(2+). Residue S109 coordinates 4-amino-2-methyl-5-(diphosphooxymethyl)pyrimidine. 136-138 (TAT) contributes to the 2-[(2R,5Z)-2-carboxy-4-methylthiazol-5(2H)-ylidene]ethyl phosphate binding site. Residue K139 participates in 4-amino-2-methyl-5-(diphosphooxymethyl)pyrimidine binding. 2-[(2R,5Z)-2-carboxy-4-methylthiazol-5(2H)-ylidene]ethyl phosphate contacts are provided by residues G165 and 185–186 (VS).

This sequence belongs to the thiamine-phosphate synthase family. Mg(2+) is required as a cofactor.

It catalyses the reaction 2-[(2R,5Z)-2-carboxy-4-methylthiazol-5(2H)-ylidene]ethyl phosphate + 4-amino-2-methyl-5-(diphosphooxymethyl)pyrimidine + 2 H(+) = thiamine phosphate + CO2 + diphosphate. The catalysed reaction is 2-(2-carboxy-4-methylthiazol-5-yl)ethyl phosphate + 4-amino-2-methyl-5-(diphosphooxymethyl)pyrimidine + 2 H(+) = thiamine phosphate + CO2 + diphosphate. The enzyme catalyses 4-methyl-5-(2-phosphooxyethyl)-thiazole + 4-amino-2-methyl-5-(diphosphooxymethyl)pyrimidine + H(+) = thiamine phosphate + diphosphate. It functions in the pathway cofactor biosynthesis; thiamine diphosphate biosynthesis; thiamine phosphate from 4-amino-2-methyl-5-diphosphomethylpyrimidine and 4-methyl-5-(2-phosphoethyl)-thiazole: step 1/1. Condenses 4-methyl-5-(beta-hydroxyethyl)thiazole monophosphate (THZ-P) and 2-methyl-4-amino-5-hydroxymethyl pyrimidine pyrophosphate (HMP-PP) to form thiamine monophosphate (TMP). The protein is Thiamine-phosphate synthase of Xanthomonas campestris pv. campestris (strain 8004).